The sequence spans 269 residues: 4-hydroxy-tetrahydrodipicolinate reductase (269 aa).

Residues 11–16 (GASGRM) and glutamate 37 contribute to the NAD(+) site. An NADP(+)-binding site is contributed by arginine 38. Residues 101–103 (GTT) and 125–128 (AGNM) each bind NAD(+). Histidine 158 functions as the Proton donor/acceptor in the catalytic mechanism. Histidine 159 contacts (S)-2,3,4,5-tetrahydrodipicolinate. Lysine 162 serves as the catalytic Proton donor. 168–169 (GT) contributes to the (S)-2,3,4,5-tetrahydrodipicolinate binding site.

Belongs to the DapB family.

The protein resides in the cytoplasm. It carries out the reaction (S)-2,3,4,5-tetrahydrodipicolinate + NAD(+) + H2O = (2S,4S)-4-hydroxy-2,3,4,5-tetrahydrodipicolinate + NADH + H(+). It catalyses the reaction (S)-2,3,4,5-tetrahydrodipicolinate + NADP(+) + H2O = (2S,4S)-4-hydroxy-2,3,4,5-tetrahydrodipicolinate + NADPH + H(+). Its pathway is amino-acid biosynthesis; L-lysine biosynthesis via DAP pathway; (S)-tetrahydrodipicolinate from L-aspartate: step 4/4. Its function is as follows. Catalyzes the conversion of 4-hydroxy-tetrahydrodipicolinate (HTPA) to tetrahydrodipicolinate. The sequence is that of 4-hydroxy-tetrahydrodipicolinate reductase from Cereibacter sphaeroides (strain ATCC 17029 / ATH 2.4.9) (Rhodobacter sphaeroides).